A 33-amino-acid polypeptide reads, in one-letter code: Gastrin (33 aa).

Gln-1 is subject to Pyrrolidone carboxylic acid. Tyr-28 carries the post-translational modification Sulfotyrosine. Phe-33 is modified (phenylalanine amide).

Belongs to the gastrin/cholecystokinin family. Post-translationally, sulfation enhances proteolytic processing, and blocks peptide degradation. Levels of sulfation differ between proteolytically-cleaved gastrins and between tissues.

The protein resides in the secreted. Its function is as follows. Gastrin stimulates the stomach mucosa to produce and secrete hydrochloric acid and the pancreas to secrete its digestive enzymes. It also stimulates smooth muscle contraction and increases blood circulation and water secretion in the stomach and intestine. This Macropus giganteus (Eastern gray kangaroo) protein is Gastrin (GAST).